The primary structure comprises 869 residues: Protein translocase subunit SecA (869 aa).

ATP-binding positions include Gln-85, 103-107, and Asp-508; that span reads GEGKT.

Belongs to the SecA family. Monomer and homodimer. Part of the essential Sec protein translocation apparatus which comprises SecA, SecYEG and auxiliary proteins SecDF. Other proteins may also be involved.

Its subcellular location is the cell membrane. The protein localises to the cytoplasm. It carries out the reaction ATP + H2O + cellular proteinSide 1 = ADP + phosphate + cellular proteinSide 2.. Functionally, part of the Sec protein translocase complex. Interacts with the SecYEG preprotein conducting channel. Has a central role in coupling the hydrolysis of ATP to the transfer of proteins into and across the cell membrane, serving as an ATP-driven molecular motor driving the stepwise translocation of polypeptide chains across the membrane. This is Protein translocase subunit SecA from Deinococcus geothermalis (strain DSM 11300 / CIP 105573 / AG-3a).